The primary structure comprises 154 residues: Superoxide dismutase [Cu-Zn] (154 aa).

The Cu cation site is built by histidine 45, histidine 47, and histidine 62. Cysteine 56 and cysteine 146 are joined by a disulfide. The Zn(2+) site is built by histidine 62, histidine 70, histidine 79, and aspartate 82. Histidine 120 provides a ligand contact to Cu cation.

This sequence belongs to the Cu-Zn superoxide dismutase family. Homodimer. It depends on Cu cation as a cofactor. Zn(2+) serves as cofactor.

The protein resides in the cytoplasm. The catalysed reaction is 2 superoxide + 2 H(+) = H2O2 + O2. Destroys radicals which are normally produced within the cells and which are toxic to biological systems. This chain is Superoxide dismutase [Cu-Zn], found in Bombyx mori (Silk moth).